The chain runs to 167 residues: Protein archease (167 aa).

Residue A2 is modified to N-acetylalanine. Residues D39, D166, and I167 each contribute to the Ca(2+) site.

It belongs to the archease family. Component of the tRNA-splicing ligase complex.

Component of the tRNA-splicing ligase complex required to facilitate the enzymatic turnover of catalytic subunit RTCB. Together with DDX1, acts by facilitating the guanylylation of RTCB, a key intermediate step in tRNA ligation. The chain is Protein archease (ZBTB8OS) from Homo sapiens (Human).